The following is a 335-amino-acid chain: MIVKKKLAAGEFAETFKNGNNITIIKAVGELVLRAYGADGGEGLRTIVRQGVSIKGMNYTSVMLHTEYAQEIEYWVGDLDYSFQEQTTKSRDVNSFQIPLRDGVRELLPEDASRNRASIKSPVDIWIGGENMTALNGIVDGGRKFEAGQEFQINTFGSVNYWVSDEEIRVFKEYSARAKYAQNEGRTALEANNVPFFDIDVPPELDGVPFSLKARVRHKSKGVDGLGDYTSISVKPAFYITEGDETTDTLIKYTSYGSTGSHSGYDFDDNTLDVMVTLSAGVHRVFPVETELDYDAVQEVQHDWYDESFTTFIEVYSDDPLLTVKGYAQILMERT.

Monomer.

The protein resides in the virion. Functionally, receptor binding protein located at the fivefold vertices. The polypeptide is Spike protein P1 (I) (Pseudoalteromonas espejiana (Bacteriophage PM2)).